The following is a 561-amino-acid chain: MCLSFLFLVSLATCVVYGNPSSPPVVDTTKGKVLGKYVSLEGVTQSVAVFLGVPFAKPPLGSLRFAPPQPAEPWSFVKNTTTYPPMCSQDAAKGQRMNDLLTNRKEKIHLEFSEDCLYLNIYTPADFTKNSRLPVMVWIHGGGMTLGGASTYDGRVLSAYENVVVVAIQYRLGIWGFFSTGDEHSRGNWGHLDQVAALHWVQDNIANFGGDPGSVTIFGESAGGFSVSVLVLSPLTKNLFHRAISESGVVFLPGLLTKDVRPAAKQIADMAGCETTTSAIIVHCLRQKTEEELLEIMKKMNLIKLSSQRDNKESYHFLSTVVDNVVLPKDPKEILAEKNFNTVPYIVGINKQECGWLLPTMMGFVPADVELDKKMAITLLEKFASLYGIPEDIIPVAIEKYRKGSDDSIKIRDGILAFIGDVSFSIPSVMVSRDHRDAGAPTYMYEYQYYPSFSSPQRPKHVVGDHADDLYSVFGAPILRDGASEEEIKLSKMVMKFWANFARNGNPNGRGLPHWPQYDQKEEYLQIGATTQQSQRLKAEEVAFWTQLLAKRQPQPHHNEL.

A signal peptide spans 1-18 (MCLSFLFLVSLATCVVYG). N-linked (GlcNAc...) asparagine glycosylation is present at Asn-79. Cys-87 and Cys-116 are disulfide-bonded. Ser-221 acts as the Acyl-ester intermediate in catalysis. The cysteines at positions 273 and 284 are disulfide-linked. Residues Glu-353 and His-466 each act as charge relay system in the active site. The Prevents secretion from ER signature appears at 558–561 (HNEL).

This sequence belongs to the type-B carboxylesterase/lipase family. As to expression, expressed in liver and kidney.

The protein resides in the lipid droplet. It is found in the cytoplasm. The protein localises to the cytosol. Its subcellular location is the endoplasmic reticulum. It localises to the microsome. It carries out the reaction a carboxylic ester + H2O = an alcohol + a carboxylate + H(+). The enzyme catalyses all-trans-retinyl hexadecanoate + H2O = all-trans-retinol + hexadecanoate + H(+). Involved in the detoxification of xenobiotics and in the activation of ester and amide prodrugs. Hydrolyzes retinyl esters. Hydrolyzes p-nitrophenyl butyrate (PNPB), triacylglycerol and monoacylglycerol. Shows higher activity against PNPB, a short-chain fatty acid ester, than against triolein, a long-chain fatty acid ester. Shows no detectable activity against diacylglycerol, cholesterol ester or phospholipids. May play a role in adipocyte lipolysis. This chain is Liver carboxylesterase 1F, found in Rattus norvegicus (Rat).